The sequence spans 648 residues: Bifunctional protein TilS/HprT (648 aa).

ATP is bound at residue 29-34; sequence SGGPDS. A Mg(2+)-binding site is contributed by D627.

This sequence in the N-terminal section; belongs to the tRNA(Ile)-lysidine synthase family. The protein in the C-terminal section; belongs to the purine/pyrimidine phosphoribosyltransferase family. The cofactor is Mg(2+).

Its subcellular location is the cytoplasm. It carries out the reaction IMP + diphosphate = hypoxanthine + 5-phospho-alpha-D-ribose 1-diphosphate. The catalysed reaction is GMP + diphosphate = guanine + 5-phospho-alpha-D-ribose 1-diphosphate. It catalyses the reaction cytidine(34) in tRNA(Ile2) + L-lysine + ATP = lysidine(34) in tRNA(Ile2) + AMP + diphosphate + H(+). Ligates lysine onto the cytidine present at position 34 of the AUA codon-specific tRNA(Ile) that contains the anticodon CAU, in an ATP-dependent manner. Cytidine is converted to lysidine, thus changing the amino acid specificity of the tRNA from methionine to isoleucine. The protein is Bifunctional protein TilS/HprT (tilS/hprT) of Listeria monocytogenes serotype 4b (strain F2365).